Here is a 621-residue protein sequence, read N- to C-terminus: DNA mismatch repair protein MutL (621 aa).

This sequence belongs to the DNA mismatch repair MutL/HexB family.

Its function is as follows. This protein is involved in the repair of mismatches in DNA. It is required for dam-dependent methyl-directed DNA mismatch repair. May act as a 'molecular matchmaker', a protein that promotes the formation of a stable complex between two or more DNA-binding proteins in an ATP-dependent manner without itself being part of a final effector complex. In Petrotoga mobilis (strain DSM 10674 / SJ95), this protein is DNA mismatch repair protein MutL.